The sequence spans 511 residues: MKKADILVLDFGSQYTQLIARRLREQGVYAEILPFNVSLADIKAKEPKGIILSGGPASVYATDAYFCDKGIFDLGLPVLGICYGMQLMAHHYKATVAPAGHKEYGKANIEIKKDSALFKNLPKKQTVWMSHSDKVENLPDGFEVLATSENSPFCVFGNEDKKFFALQFHPEVQHSEFGKNILKNFAKYACNCESVWNMGSFAKTQAEKIREEVGNDKVLCAVSGGVDSSVVAALLASAIKEQVIVVFVDNGLLRSGEKEQVEFMFKNTLGIDLISIDASEIFLSRLANVRDPEQKRKIIGNTFIEVFEEEAKKHKDVKYLAQGTLYTDIIESSVVGASKTIKSHHNVGGLPEKMNLKLIEPLKEIFKDEVRALGLELGLSKEVVYRHPFPGPGLAIRIMGEVNRPSLELLRKVDVILLEELKSTGWYDKTWQAFCVLLNVKSVGVMGDNRTYDNAVCIRVVDASDGMTATFSHLPYEVLENISRRIINEVEGINRVVYDISSKPPATIEWE.

Residues 5–195 (DILVLDFGSQ…AKYACNCESV (191 aa)) form the Glutamine amidotransferase type-1 domain. Residue Cys-82 is the Nucleophile of the active site. Active-site residues include His-169 and Glu-171. The GMPS ATP-PPase domain maps to 196 to 386 (WNMGSFAKTQ…LGLSKEVVYR (191 aa)). 223–229 (SGGVDSS) provides a ligand contact to ATP.

In terms of assembly, homodimer.

The enzyme catalyses XMP + L-glutamine + ATP + H2O = GMP + L-glutamate + AMP + diphosphate + 2 H(+). Its pathway is purine metabolism; GMP biosynthesis; GMP from XMP (L-Gln route): step 1/1. Its function is as follows. Catalyzes the synthesis of GMP from XMP. This is GMP synthase [glutamine-hydrolyzing] from Campylobacter jejuni subsp. jejuni serotype O:23/36 (strain 81-176).